The following is a 2609-amino-acid chain: Mycosubtilin synthase subunit C (2609 aa).

Residues 258-1628 (PREKTIHQLF…RVCAQPEMTV (1371 aa)) are domain 1 (D-serine-activating). An adenylation 1 region spans residues 288–695 (TYQELNEKAN…HIPSIQESIV (408 aa)). One can recognise a Carrier 1 domain in the interval 771–845 (APRTELEKIL…ELVPYVEPVT (75 aa)). Serine 806 bears the O-(pantetheine 4'-phosphoryl)serine mark. The interval 853-1312 (IKGPALLTPI…EISIDELDQF (460 aa)) is epimerization 1. The condensation 1 stretch occupies residues 1322–1623 (IENIYPLTPM…NTIPVRVCAQ (302 aa)). The domain 2 (isoleucine-activating) stretch occupies residues 1778-2359 (PKEKTIYQLF…AHAIQAAALP (582 aa)). The adenylation 2 stretch occupies residues 1808–2205 (TYRQLNEQAN…LVESVKEAVV (398 aa)). The Carrier 2 domain occupies 2282 to 2357 (APRTLIEKQL…TMAHAIQAAA (76 aa)). The residue at position 2317 (serine 2317) is an O-(pantetheine 4'-phosphoryl)serine. The thioesterase stretch occupies residues 2375–2581 (IPVFCFPPLI…ENMSTIRSIM (207 aa)).

This sequence belongs to the ATP-dependent AMP-binding enzyme family. Requires pantetheine 4'-phosphate as cofactor.

This protein is a multifunctional enzyme, able to activate and polymerize the amino acids Ser and Asn as part of the synthesis of mycosubtilin. The Ser residue is further epimerized to the D-isomer form. The activation sites for these amino acids consist of individual domains. The sequence is that of Mycosubtilin synthase subunit C (mycC) from Bacillus subtilis.